Reading from the N-terminus, the 128-residue chain is Riboflavin kinase (128 aa).

Residue 12–17 (GKGEGK) participates in CDP binding. Residues threonine 41 and asparagine 43 each contribute to the Mg(2+) site. Residues threonine 97 and glutamate 105 each coordinate FMN. CDP is bound at residue 110–113 (IKLR).

The protein belongs to the archaeal riboflavin kinase family. It depends on Mg(2+) as a cofactor.

It catalyses the reaction riboflavin + CTP = CDP + FMN + H(+). Its pathway is cofactor biosynthesis; FMN biosynthesis; FMN from riboflavin (CTP route): step 1/1. Catalyzes the CTP-dependent phosphorylation of riboflavin (vitamin B2) to form flavin mononucleotide (FMN). The chain is Riboflavin kinase from Methanococcus aeolicus (strain ATCC BAA-1280 / DSM 17508 / OCM 812 / Nankai-3).